Consider the following 581-residue polypeptide: Colicin-E2 (581 aa).

Disordered regions lie at residues 1 to 74, 242 to 269, 293 to 320, 421 to 488, and 513 to 566; these read MSGG…SGGG, QTLS…NTRD, PDQV…EAAE, ADAA…IADK, and DLSK…MNNI. Residues 20-35 show a composition bias toward gly residues; that stretch reads INGGPTGLGVGGGASD. Low complexity predominate over residues 36–45; sequence GSGWSSENNP. Over residues 46–74 the composition is skewed to gly residues; that stretch reads WGGGSGSGIHWGGGSGHGNGGGNGNSGGG. Residues 242–251 show a composition bias toward polar residues; that stretch reads QTLSPGVTNN. Basic and acidic residues-rich tracts occupy residues 296–320, 429–452, and 464–475; these read VKQR…EAAE, QERR…ESKR, and PVGDKWLDDAGK. Over residues 518–527 the composition is skewed to polar residues; the sequence is FKGSNKTNIQ. A compositionally biased stretch (basic and acidic residues) spans 535–554; sequence RKKDQVGGRERFELHHDKPI. Positions 549, 574, and 578 each coordinate Zn(2+).

It belongs to the colicin/pyosin nuclease family.

In terms of biological role, this plasmid-coded bactericidal protein is an endonuclease active on both single- and double-stranded DNA but with undefined specificity. Colicins are polypeptide toxins produced by and active against E.coli and closely related bacteria. This Escherichia coli protein is Colicin-E2 (col).